Here is a 172-residue protein sequence, read N- to C-terminus: MNPFRWSFRAQFLLGFLACAGLLAYAIYVQLHLGLEPCPLCIFQRIAFAALAVFFLIGALHGPRAAGARKVYGVLSFIAAGVGMGIGARHVWVQIRPKDMMSSCGPPLSFLSETMGPFEVFRTVLTGTGDCGNIDWRFLGLSMPMWSMVWFVGLALWALSAGFKARRSSLHH.

Topologically, residues 1–11 are cytoplasmic; that stretch reads MNPFRWSFRAQ. A helical membrane pass occupies residues 12-28; that stretch reads FLLGFLACAGLLAYAIY. Topologically, residues 29–46 are periplasmic; it reads VQLHLGLEPCPLCIFQRI. Residues Cys-38 and Cys-41 are joined by a disulfide bond. The helical transmembrane segment at 47–63 threads the bilayer; the sequence is AFAALAVFFLIGALHGP. The Cytoplasmic portion of the chain corresponds to 64 to 70; it reads RAAGARK. Residues 71–88 form a helical membrane-spanning segment; it reads VYGVLSFIAAGVGMGIGA. The Periplasmic segment spans residues 89–145; the sequence is RHVWVQIRPKDMMSSCGPPLSFLSETMGPFEVFRTVLTGTGDCGNIDWRFLGLSMPM. Cys-104 and Cys-131 are disulfide-bonded. Residues 146–164 traverse the membrane as a helical segment; sequence WSMVWFVGLALWALSAGFK. Residues 165–172 are Cytoplasmic-facing; sequence ARRSSLHH.

The protein belongs to the DsbB family.

It is found in the cell inner membrane. In terms of biological role, required for disulfide bond formation in some periplasmic proteins. Acts by oxidizing the DsbA protein. In Xanthomonas oryzae pv. oryzae (strain MAFF 311018), this protein is Disulfide bond formation protein B.